Reading from the N-terminus, the 409-residue chain is Chaetoglobosin A biosynthesis cluster protein C (409 aa).

Residues 51–120 (DLPANSRKLT…VKRQPQLRTR (70 aa)) enclose the HTH CENPB-type domain. Positions 84 to 113 (RGVEDMANHLLRERDAPPVGKLWAHNFVKR) form a DNA-binding region, H-T-H motif. Disordered regions lie at residues 243–269 (PTHP…ETRS) and 320–350 (ANEP…QDPL). The segment covering 255 to 269 (PWASKTPYNAQETRS) has biased composition (polar residues).

It localises to the nucleus. In terms of biological role, part of the gene cluster that mediates the biosynthesis of chaetoglobosin A which has a unique inhibitory activity against actin polymerization in mammalian cells. Chaetoglobosin A and its intermediates are involved in the morphological differentiation of C.globosum. The first step of the pathway is the synthesis of prochaetoglobosin I via condensation of one acetyl-CoA, 8 malonyl-CoA, and a L-tryptophan molecule by the PKS-NRPS hybrid synthetase cheA, followed by reduction of backbone double bond to install desired geometry by the enoyl reductase cheB. Further multiple oxidation steps performed by the cytochrome P450 monooxygenases cheE and cheG, as well as by the FAD-linked oxidoreductase cheF, lead to the formation of chaetoglobosin A. Depending on the order of action of these reductases, distinct intermediates can be identified. Within the pathway, the cytochrome P450 monooxygenase cheE catalyzes a stereospecific epoxidation on prochaetoglobosin I, cytoglobosin D, and chaetoglobosin J intermediates. The FAD-linked oxidoreductase cheF performs dehydrogenation of the C-20 hydroxyl groups in the 20-dihyrochaetoglobosin A and cytoglobosin D intermediates. Finally, the cytochrome P450 monooxygenase cheG can catalyze the stereospecific dihydroxylation of prochaetoglobosin I and prochaetoglobosin IV at C-19 and C-20, respectively. The Diels-Alderase cheD may play a role in the post-PKS-NRPS biosynthetic steps catalyzing Diels-Alder cyclization. This is Chaetoglobosin A biosynthesis cluster protein C from Chaetomium globosum (strain ATCC 6205 / CBS 148.51 / DSM 1962 / NBRC 6347 / NRRL 1970) (Soil fungus).